Consider the following 282-residue polypeptide: Pantothenate synthetase (282 aa).

30-37 (MGYLHEGH) contacts ATP. The active-site Proton donor is the H37. Q61 contacts (R)-pantoate. Q61 contacts beta-alanine. 147 to 150 (GMKD) is a binding site for ATP. Residue Q153 participates in (R)-pantoate binding. Residues V176 and 184-187 (KSSR) contribute to the ATP site.

This sequence belongs to the pantothenate synthetase family. In terms of assembly, homodimer.

The protein localises to the cytoplasm. It carries out the reaction (R)-pantoate + beta-alanine + ATP = (R)-pantothenate + AMP + diphosphate + H(+). It participates in cofactor biosynthesis; (R)-pantothenate biosynthesis; (R)-pantothenate from (R)-pantoate and beta-alanine: step 1/1. Its function is as follows. Catalyzes the condensation of pantoate with beta-alanine in an ATP-dependent reaction via a pantoyl-adenylate intermediate. The polypeptide is Pantothenate synthetase (Bacillus mycoides (strain KBAB4) (Bacillus weihenstephanensis)).